The primary structure comprises 443 residues: ATP-dependent protease ATPase subunit HslU (443 aa).

Residues isoleucine 20, 62–67 (GVGKTE), aspartate 255, glutamate 321, and arginine 393 contribute to the ATP site.

The protein belongs to the ClpX chaperone family. HslU subfamily. In terms of assembly, a double ring-shaped homohexamer of HslV is capped on each side by a ring-shaped HslU homohexamer. The assembly of the HslU/HslV complex is dependent on binding of ATP.

The protein resides in the cytoplasm. Functionally, ATPase subunit of a proteasome-like degradation complex; this subunit has chaperone activity. The binding of ATP and its subsequent hydrolysis by HslU are essential for unfolding of protein substrates subsequently hydrolyzed by HslV. HslU recognizes the N-terminal part of its protein substrates and unfolds these before they are guided to HslV for hydrolysis. The sequence is that of ATP-dependent protease ATPase subunit HslU from Helicobacter pylori (strain G27).